The following is a 2176-amino-acid chain: Methyl-CpG-binding domain-containing protein 9 (2176 aa).

Residues 1–13 (MEPTDSTNEQLGD) are compositionally biased toward polar residues. Disordered regions lie at residues 1 to 20 (MEPTDSTNEQLGDTKTAAVK) and 28 to 85 (GIDL…RDAS). The segment at 83-133 (DASCGACGRPESIELVVVCDACERGFHMSCVNDGVEAAPSADWMCSDCRTG) adopts a PHD-type 1 zinc-finger fold. The segment at 86–131 (CGACGRPESIELVVVCDACERGFHMSCVNDGVEAAPSADWMCSDCR) adopts an RING-type 1; degenerate zinc-finger fold. The region spanning 258–327 (RHFISERHGV…MDAEIRNENS (70 aa)) is the MBD domain. Positions 403-456 (GCPMQFEDFFVLSLGRIDIRQSYHNVNVIYPIGYKSCWHDKITGSLFTCEVSDG) constitute an FYR N-terminal domain. The stretch at 491 to 511 (EQNSDKLSNRRDSTQERDDDA) forms a coiled coil. The 149-residue stretch at 550–698 (SSRVDFDKNL…ESCTNYRTLK (149 aa)) folds into the FYR C-terminal domain. 3 consecutive short sequence motifs (nuclear localization signal) follow at residues 914–921 (SRRGRKKD), 1124–1131 (KKRTYISV), and 1256–1263 (YRKLECLS). One copy of the Pumilio repeat lies at 1098 to 1137 (PTKKAVLSLLADIRGGDLVQRSIKGTKKRTYISVSDVIMK). The Bromo domain maps to 1130–1245 (SVSDVIMKKC…EKFKSLYEAE (116 aa)). Residues 1251 to 1273 (QKLKDYRKLECLSAEMKKEIKDI) adopt a coiled-coil conformation. The PHD-type 2 zinc-finger motif lies at 1287–1337 (EGVCKVCGVDKDDDSVLLCDTCDAEYHTYCLNPPLIRIPDGNWYCPSCVIA). The segment at 1290–1335 (CKVCGVDKDDDSVLLCDTCDAEYHTYCLNPPLIRIPDGNWYCPSCV) adopts an RING-type 2; degenerate zinc-finger fold. Positions 1337–1344 (AKRMAQEA) match the Nuclear localization signal motif. The stretch at 1410–1437 (QHLEQCAEAIIEMQQKLRSLSSEWKNAK) forms a coiled coil. 2 disordered regions span residues 1472-1553 (GCDP…NLPE) and 1565-1595 (GRNHETHSPNSNAVELPTAHDASSQASQELQ). 3 stretches are compositionally biased toward polar residues: residues 1492-1513 (SSTAYLNKNQGKSPLETDTQPG), 1523-1532 (KISSPETISS), and 1585-1595 (DASSQASQELQ). Residues 1588-1628 (SQASQELQACQQDLSATSNEIQNLQQSIRSIESQLLKQSIR) adopt a coiled-coil conformation. The Nuclear localization signal signature appears at 1761 to 1768 (EKRYGPCI). Residues 2136–2176 (IDETKPIISLPDQKSQPVSDSQERSSRVRRSGKKRKEPEGS) are disordered.

Interacts with histone H4. As to expression, expressed in leaves, buds, flowers and stems.

Its subcellular location is the nucleus. It catalyses the reaction L-lysyl-[protein] + acetyl-CoA = N(6)-acetyl-L-lysyl-[protein] + CoA + H(+). Probable transcriptional regulator that acts as a histone acetyltransferase. Mediates the acetylation of histone H3 and H4 of target loci (e.g. FLC). Involved in an auxin-independent regulation of shoot branching and flowering time. This chain is Methyl-CpG-binding domain-containing protein 9 (MBD9), found in Arabidopsis thaliana (Mouse-ear cress).